The chain runs to 215 residues: Imidazole glycerol phosphate synthase subunit HisH (215 aa).

A Glutamine amidotransferase type-1 domain is found at Thr-7–Pro-215. Catalysis depends on Cys-86, which acts as the Nucleophile. Catalysis depends on residues His-195 and Glu-197.

As to quaternary structure, heterodimer of HisH and HisF.

The protein resides in the cytoplasm. The enzyme catalyses 5-[(5-phospho-1-deoxy-D-ribulos-1-ylimino)methylamino]-1-(5-phospho-beta-D-ribosyl)imidazole-4-carboxamide + L-glutamine = D-erythro-1-(imidazol-4-yl)glycerol 3-phosphate + 5-amino-1-(5-phospho-beta-D-ribosyl)imidazole-4-carboxamide + L-glutamate + H(+). The catalysed reaction is L-glutamine + H2O = L-glutamate + NH4(+). The protein operates within amino-acid biosynthesis; L-histidine biosynthesis; L-histidine from 5-phospho-alpha-D-ribose 1-diphosphate: step 5/9. IGPS catalyzes the conversion of PRFAR and glutamine to IGP, AICAR and glutamate. The HisH subunit catalyzes the hydrolysis of glutamine to glutamate and ammonia as part of the synthesis of IGP and AICAR. The resulting ammonia molecule is channeled to the active site of HisF. This Dechloromonas aromatica (strain RCB) protein is Imidazole glycerol phosphate synthase subunit HisH.